A 1182-amino-acid polypeptide reads, in one-letter code: uncharacterized protein (1182 aa).

A helical membrane pass occupies residues 618-638 (GSSSLVCSVMVVIFSIILYYL).

The protein localises to the host membrane. This is an uncharacterized protein from Callospermophilus lateralis (Golden-mantled ground squirrel).